The chain runs to 435 residues: MSACLSSGGGGAAAYSFELEKVKSPPPSSSTTTTRATSPSSTISESSNSPLAISTRKPRTQRKRPNQTYNEAATLLSTAYPNIFSSNLSSKQKTHSSSNSHFYGPLLSDNDDASDLLLPYESIEEPDFLFHPTIQTKTEFFSDQKEVNSGGDCYGGEIEKFDFSDEFDAESILDEDIEEGIDSIMGTVVESNSNSGIYESRVPGMINRGGRSSSNRIGKLEQMMMINSWNRSSNGFNFPLGLGLRSALRENDDTKLWKIHTVDFEQISPRIQTVKTETAISTVDEEKSDGKKVVISGEKSNKKKKKKKMTVTTTLITESKSLEDTEETSLKRTGPLLKLDYDGVLEAWSDKTSPFPDEIQGSEAVDVNARLAQIDLFGDSGMREASVLRYKEKRRTRLFSKKIRYQVRKLNADQRPRMKGRFVRRPNESTPSGQR.

Residues 1 to 59 (MSACLSSGGGGAAAYSFELEKVKSPPPSSSTTTTRATSPSSTISESSNSPLAISTRKPR) constitute a chloroplast transit peptide. 2 disordered regions span residues 21 to 66 (KVKS…KRPN) and 412 to 435 (ADQR…SGQR). Residues 29–49 (SSTTTTRATSPSSTISESSNS) are compositionally biased toward low complexity. Basic residues predominate over residues 56–65 (RKPRTQRKRP). In terms of domain architecture, CCT spans 383–425 (REASVLRYKEKRRTRLFSKKIRYQVRKLNADQRPRMKGRFVRR).

In terms of tissue distribution, expressed in leaves and young flower buds.

It is found in the plastid. The protein localises to the chloroplast. Its subcellular location is the nucleus. Responsible for specific up-regulation of the translocon genes TOC33 and TOC75 in leaves. Involved in the general chloroplast protein import pathway regulation, including protein import and protein translation efficiencies. The sequence is that of Protein CHLOROPLAST IMPORT APPARATUS 2 (CIA2) from Arabidopsis thaliana (Mouse-ear cress).